Reading from the N-terminus, the 222-residue chain is Exosome complex component Rrp4 (222 aa).

Residues 63-131 (GDLVIGRVTG…EINRVKLTLR (69 aa)) enclose the S1 motif domain.

This sequence belongs to the RRP4 family. In terms of assembly, component of the archaeal exosome complex. Forms a trimer of Rrp4 and/or Csl4 subunits. The trimer associates with a hexameric ring-like arrangement composed of 3 Rrp41-Rrp42 heterodimers.

It localises to the cytoplasm. Functionally, non-catalytic component of the exosome, which is a complex involved in RNA degradation. Increases the RNA binding and the efficiency of RNA degradation. Confers strong poly(A) specificity to the exosome. The polypeptide is Exosome complex component Rrp4 (Methanosphaera stadtmanae (strain ATCC 43021 / DSM 3091 / JCM 11832 / MCB-3)).